The sequence spans 644 residues: Macrolide export ATP-binding/permease protein MacB (644 aa).

One can recognise an ABC transporter domain in the interval 7–245 (IELQDITRSF…IPETDQNGRR (239 aa)). An ATP-binding site is contributed by 43–50 (GPSGSGKS). Transmembrane regions (helical) follow at residues 271–291 (ALTL…LAIG), 526–546 (IAAI…LVSV), 570–590 (FLTE…VIGI), and 607–627 (LLPM…FGFL).

This sequence belongs to the ABC transporter superfamily. Macrolide exporter (TC 3.A.1.122) family. In terms of assembly, homodimer. Part of the tripartite efflux system MacAB-TolC, which is composed of an inner membrane transporter, MacB, a periplasmic membrane fusion protein, MacA, and an outer membrane component, TolC. The complex forms a large protein conduit and can translocate molecules across both the inner and outer membranes. Interacts with MacA.

Its subcellular location is the cell inner membrane. Its function is as follows. Part of the tripartite efflux system MacAB-TolC. MacB is a non-canonical ABC transporter that contains transmembrane domains (TMD), which form a pore in the inner membrane, and an ATP-binding domain (NBD), which is responsible for energy generation. Confers resistance against macrolides. This Marinobacter nauticus (strain ATCC 700491 / DSM 11845 / VT8) (Marinobacter aquaeolei) protein is Macrolide export ATP-binding/permease protein MacB.